The sequence spans 189 residues: GTP cyclohydrolase 1 (189 aa).

Positions 79, 82, and 150 each coordinate Zn(2+).

This sequence belongs to the GTP cyclohydrolase I family. As to quaternary structure, homomer.

The enzyme catalyses GTP + H2O = 7,8-dihydroneopterin 3'-triphosphate + formate + H(+). It functions in the pathway cofactor biosynthesis; 7,8-dihydroneopterin triphosphate biosynthesis; 7,8-dihydroneopterin triphosphate from GTP: step 1/1. This chain is GTP cyclohydrolase 1, found in Rickettsia africae (strain ESF-5).